The chain runs to 490 residues: Adenylosuccinate lyase (490 aa).

Alanine 2 carries the N-acetylalanine modification. Substrate-binding positions include 26–27 (RY), 91–93 (RHD), and 117–118 (TS). Lysine 153 bears the N6-acetyllysine mark. Residue histidine 165 is the Proton donor/acceptor of the active site. Glutamine 247 contributes to the substrate binding site. Serine 295 (proton donor/acceptor) is an active-site residue. Lysine 301 is subject to N6-acetyllysine. Residues arginine 309, arginine 335, serine 340, and arginine 344 each coordinate substrate. Lysine 421 participates in a covalent cross-link: Glycyl lysine isopeptide (Lys-Gly) (interchain with G-Cter in SUMO1).

Belongs to the lyase 1 family. Adenylosuccinate lyase subfamily. In terms of assembly, homotetramer. Residues from neighboring subunits contribute catalytic and substrate-binding residues to each active site.

The catalysed reaction is N(6)-(1,2-dicarboxyethyl)-AMP = fumarate + AMP. It catalyses the reaction (2S)-2-[5-amino-1-(5-phospho-beta-D-ribosyl)imidazole-4-carboxamido]succinate = 5-amino-1-(5-phospho-beta-D-ribosyl)imidazole-4-carboxamide + fumarate. It functions in the pathway purine metabolism; AMP biosynthesis via de novo pathway; AMP from IMP: step 2/2. It participates in purine metabolism; IMP biosynthesis via de novo pathway; 5-amino-1-(5-phospho-D-ribosyl)imidazole-4-carboxamide from 5-amino-1-(5-phospho-D-ribosyl)imidazole-4-carboxylate: step 2/2. Catalyzes two non-sequential steps in de novo AMP synthesis: converts (S)-2-(5-amino-1-(5-phospho-D-ribosyl)imidazole-4-carboxamido)succinate (SAICAR) to fumarate plus 5-amino-1-(5-phospho-D-ribosyl)imidazole-4-carboxamide, and thereby also contributes to de novo IMP synthesis, and converts succinyladenosine monophosphate (SAMP) to AMP and fumarate. The polypeptide is Adenylosuccinate lyase (ADSL) (Bos taurus (Bovine)).